The sequence spans 891 residues: Aconitate hydratase A (891 aa).

3 residues coordinate [4Fe-4S] cluster: cysteine 435, cysteine 501, and cysteine 504.

The protein belongs to the aconitase/IPM isomerase family. In terms of assembly, monomer. [4Fe-4S] cluster serves as cofactor.

It carries out the reaction citrate = D-threo-isocitrate. The protein operates within carbohydrate metabolism; tricarboxylic acid cycle; isocitrate from oxaloacetate: step 2/2. Functionally, catalyzes the reversible isomerization of citrate to isocitrate via cis-aconitate. The apo form of AcnA functions as a RNA-binding regulatory protein which plays a role as a maintenance or survival enzyme during nutritional or oxidative stress. During oxidative stress inactive AcnA apo-enzyme without iron sulfur clusters binds the acnA mRNA 3' UTRs (untranslated regions), stabilizes acnA mRNA and increases AcnA synthesis, thus mediating a post-transcriptional positive autoregulatory switch. AcnA also enhances the stability of the sodA transcript. The sequence is that of Aconitate hydratase A from Escherichia coli (strain K12).